Consider the following 1522-residue polypeptide: Rho guanine nucleotide exchange factor 11 (1522 aa).

Residues 1–40 form a disordered region; it reads MSVRLPQSIDRLSSLSSLGDSAPERKSPSHHRQPSDASET. Phosphoserine is present on residues Ser-2, Ser-14, Ser-16, and Ser-35. The 80-residue stretch at 47–126 folds into the PDZ domain; sequence CVIIQKDQHG…LTLLGSSPSS (80 aa). Disordered stretches follow at residues 128 to 175 and 200 to 231; these read GISG…PEVQ and YGDT…ERFP. Pro residues predominate over residues 149-161; sequence PSPPPPPPLPPPQ. 2 positions are modified to phosphoserine: Ser-245 and Ser-251. Thr-254 is modified (phosphothreonine). A phosphoserine mark is found at Ser-255 and Ser-271. The segment at 263–286 is disordered; the sequence is AQHHRRQGSDAAVPSTGDQGVDQS. Positions 306 to 486 constitute an RGSL domain; it reads ESDIIFQDLE…NTYMSHAGIR (181 aa). Positions 444-470 form a coiled coil; that stretch reads LRERQVAEKQLAALGDILSKYEEDRSA. Residues 490–555 form a disordered region; that stretch reads ARPSNTAEKA…SSQSTFHIPL (66 aa). The span at 521-533 shows a compositional bias: basic and acidic residues; that stretch reads SKKEKDALEDKKR. 3 positions are modified to phosphoserine: Ser-556, Ser-635, and Ser-663. The segment at 573-680 is disordered; the sequence is ENNQQYDAPE…FTPKMGRRSI (108 aa). A compositionally biased stretch (basic and acidic residues) spans 601 to 637; that stretch reads DSSRSEIRLGRSESLKGREEMKRSRKAENVPRSRSDV. Over residues 651–664 the composition is skewed to low complexity; that stretch reads SASSSTSSLSTRSL. A phosphothreonine mark is found at Thr-668 and Thr-672. Positions 734–923 constitute a DH domain; sequence DRQEVINELF…REILKYVNEA (190 aa). Residues 965–1079 enclose the PH domain; that stretch reads KMIHEGPLTW…WMELLEEAVR (115 aa). The interval 1084–1141 is disordered; it reads HPGAAPMPVHPPPPGPREPAQQGPTPSRVELDDSDVFHGEPEPEELPGGTGSQQRVQG. Over residues 1091–1100 the composition is skewed to pro residues; it reads PVHPPPPGPR. The segment covering 1112–1124 has biased composition (basic and acidic residues); that stretch reads VELDDSDVFHGEP. Ser-1155 is modified (phosphoserine). 3 disordered regions span residues 1223-1320, 1332-1423, and 1453-1522; these read ETQA…AGGY, KVVP…RDVG, and LGGE…SPGP. A compositionally biased stretch (polar residues) spans 1236–1245; that stretch reads PTPSVISVTS. Residues Ser-1295 and Ser-1300 each carry the phosphoserine modification. Residues 1338 to 1353 show a composition bias toward low complexity; the sequence is PESGQSEPGPPEVEGG. Phosphoserine occurs at positions 1457 and 1458. 2 positions are modified to phosphothreonine: Thr-1462 and Thr-1475. Ser-1480 is subject to Phosphoserine. Acidic residues predominate over residues 1503–1513; it reads DGSDAPLEDST.

In terms of assembly, interacts with GNA12 and GNA13 through the RGS domain. Interacts with RHOA, PLXNB1 and PLXNB2. Interacts with SLC1A6. Interacts (via DH domain) with GCSAM (via C-terminus). Found in a complex with ARHGEF11 and ARHGEF12; binding to ARHGEF11 and ARHGEF12 enhances CDC42 GEF activity of PLEKHG4B, and PLEKHG4B, in turn, inhibits ARHGEF11- and ARHGEF12-mediated RHOA activation. Post-translationally, phosphorylated by MAP kinase p38 (MAPK11, MAPK12, MAPK13 and/or MAPK14). Ubiquitinated by the BCR(KLHL20) E3 ubiquitin ligase complex when previously phosphorylated by MAP kinase p38 (MAPK11, MAPK12, MAPK13 and/or MAPK14), leading to its degradation, thereby restricting RhoA activity and facilitating growth cone spreading and neurite outgrowth. In terms of tissue distribution, ubiquitously expressed.

The protein resides in the cytoplasm. It is found in the membrane. Its function is as follows. May play a role in the regulation of RhoA GTPase by guanine nucleotide-binding alpha-12 (GNA12) and alpha-13 (GNA13). Acts as guanine nucleotide exchange factor (GEF) for RhoA GTPase and may act as GTPase-activating protein (GAP) for GNA12 and GNA13. Involved in neurotrophin-induced neurite outgrowth. In Homo sapiens (Human), this protein is Rho guanine nucleotide exchange factor 11 (ARHGEF11).